The primary structure comprises 551 residues: DEAD-box ATP-dependent RNA helicase 47, mitochondrial (551 aa).

The N-terminal 29 residues, 1–29 (MAASTSTRFLVLLKDFSAFRKISWTCAAT), are a transit peptide targeting the mitochondrion. The short motif at 110 to 138 (KSFEELGLPDSLLDSLEREGFSVPTDVQS) is the Q motif element. The region spanning 141 to 340 (VPAIIKGHDA…KSWSHEPVLV (200 aa)) is the Helicase ATP-binding domain. 154-161 (SYTGSGKT) is a binding site for ATP. Positions 274-277 (DEVD) match the DEAD box motif. In terms of domain architecture, Helicase C-terminal spans 397–548 (TLRRCVHALD…ELVVTEEDKA (152 aa)).

This sequence belongs to the DEAD box helicase family. Mostly expressed in leaves and flowers, and, to a lower extent, in roots, seedlings and siliques, especially in meristematic regions.

The protein localises to the mitochondrion. It catalyses the reaction ATP + H2O = ADP + phosphate + H(+). Functionally, essential protein required during embryogenesis. Required for mitochondrial metabolism. Necessary for normal plasmodesmata (PD) development and aperture regulation. In Arabidopsis thaliana (Mouse-ear cress), this protein is DEAD-box ATP-dependent RNA helicase 47, mitochondrial (RH47).